The following is a 131-amino-acid chain: Putative gamma-taxilin 2 (131 aa).

Belongs to the taxilin family. In terms of tissue distribution, ubiquitously expressed.

The polypeptide is Putative gamma-taxilin 2 (TXLNGY) (Homo sapiens (Human)).